Reading from the N-terminus, the 111-residue chain is UPF0060 membrane protein Cbei_2176 (111 aa).

Transmembrane regions (helical) follow at residues Ile7–Trp27, Ser33–Leu53, Phe60–Trp80, and Ile85–Ile105.

Belongs to the UPF0060 family.

It localises to the cell membrane. This Clostridium beijerinckii (strain ATCC 51743 / NCIMB 8052) (Clostridium acetobutylicum) protein is UPF0060 membrane protein Cbei_2176.